Reading from the N-terminus, the 485-residue chain is Adenosylhomocysteinase 1 (485 aa).

Substrate contacts are provided by T64, D139, and E205. 206–208 is an NAD(+) binding site; that stretch reads TTT. Residues K235 and D239 each contribute to the substrate site. Residues 271-276, E292, 348-350, N397, H404, K479, 479-483, and Y483 contribute to the NAD(+) site; these read GDVGKG, IGH, and KPPHY.

This sequence belongs to the adenosylhomocysteinase family. In terms of assembly, homotetramer. It depends on NAD(+) as a cofactor.

It catalyses the reaction S-adenosyl-L-homocysteine + H2O = L-homocysteine + adenosine. It participates in amino-acid biosynthesis; L-homocysteine biosynthesis; L-homocysteine from S-adenosyl-L-homocysteine: step 1/1. Functionally, essential protein during embryogenesis. Adenosylhomocysteine is a competitive inhibitor of S-adenosyl-L-methionine-dependent methyl transferase reactions; therefore adenosylhomocysteinase may play a key role in the control of methylations via regulation of the intracellular concentration of adenosylhomocysteine. Required for DNA methylation-dependent gene silencing. The protein is Adenosylhomocysteinase 1 of Arabidopsis thaliana (Mouse-ear cress).